We begin with the raw amino-acid sequence, 493 residues long: Glutamyl-tRNA(Gln) amidotransferase subunit A (493 aa).

Catalysis depends on charge relay system residues Lys-79 and Ser-159. The active-site Acyl-ester intermediate is the Ser-183.

The protein belongs to the amidase family. GatA subfamily. In terms of assembly, heterotrimer of A, B and C subunits.

It catalyses the reaction L-glutamyl-tRNA(Gln) + L-glutamine + ATP + H2O = L-glutaminyl-tRNA(Gln) + L-glutamate + ADP + phosphate + H(+). Functionally, allows the formation of correctly charged Gln-tRNA(Gln) through the transamidation of misacylated Glu-tRNA(Gln) in organisms which lack glutaminyl-tRNA synthetase. The reaction takes place in the presence of glutamine and ATP through an activated gamma-phospho-Glu-tRNA(Gln). The polypeptide is Glutamyl-tRNA(Gln) amidotransferase subunit A (Chelativorans sp. (strain BNC1)).